We begin with the raw amino-acid sequence, 500 residues long: NAD(P)H-quinone oxidoreductase chain 4, chloroplastic (500 aa).

A run of 12 helical transmembrane segments spans residues 4-24 (FPWL…ILFI), 37-57 (ICIC…NFQL), 80-100 (LGID…TTLA), 134-154 (LLLF…LLSM), 167-187 (FILY…GMGL), 208-228 (GLEI…PPII), 242-262 (HYST…YGLV), 272-292 (AHSL…IYAA), 330-350 (GAIL…FLAG), 386-406 (LASP…GIIT), 416-436 (ILIT…LLSM), and 462-482 (IFIL…PDFV).

It belongs to the complex I subunit 4 family.

Its subcellular location is the plastid. The protein resides in the chloroplast thylakoid membrane. The enzyme catalyses a plastoquinone + NADH + (n+1) H(+)(in) = a plastoquinol + NAD(+) + n H(+)(out). It catalyses the reaction a plastoquinone + NADPH + (n+1) H(+)(in) = a plastoquinol + NADP(+) + n H(+)(out). The sequence is that of NAD(P)H-quinone oxidoreductase chain 4, chloroplastic from Amborella trichopoda.